Reading from the N-terminus, the 298-residue chain is UDP-N-acetylenolpyruvoylglucosamine reductase (298 aa).

One can recognise an FAD-binding PCMH-type domain in the interval 26-191 (KTGGPADWLA…LDATFALEPG (166 aa)). R170 is an active-site residue. S220 serves as the catalytic Proton donor. E290 is an active-site residue.

The protein belongs to the MurB family. It depends on FAD as a cofactor.

The protein localises to the cytoplasm. It catalyses the reaction UDP-N-acetyl-alpha-D-muramate + NADP(+) = UDP-N-acetyl-3-O-(1-carboxyvinyl)-alpha-D-glucosamine + NADPH + H(+). It functions in the pathway cell wall biogenesis; peptidoglycan biosynthesis. In terms of biological role, cell wall formation. The sequence is that of UDP-N-acetylenolpyruvoylglucosamine reductase from Limosilactobacillus reuteri subsp. reuteri (strain JCM 1112) (Lactobacillus reuteri).